The primary structure comprises 311 residues: Peptide methionine sulfoxide reductase MsrA/MsrB 2 (311 aa).

The interval 1 to 155 (MHEIYLAGGC…PNGYCHINVN (155 aa)) is peptide methionine sulfoxide reductase A. The active site involves Cys-10. Residues 172–295 (DEELKKTLSP…NSLSIRFIPK (124 aa)) enclose the MsrB domain. Cys-284 acts as the Nucleophile in catalysis.

In the N-terminal section; belongs to the MsrA Met sulfoxide reductase family. This sequence in the C-terminal section; belongs to the MsrB Met sulfoxide reductase family.

The enzyme catalyses L-methionyl-[protein] + [thioredoxin]-disulfide + H2O = L-methionyl-(S)-S-oxide-[protein] + [thioredoxin]-dithiol. It catalyses the reaction [thioredoxin]-disulfide + L-methionine + H2O = L-methionine (S)-S-oxide + [thioredoxin]-dithiol. The catalysed reaction is L-methionyl-[protein] + [thioredoxin]-disulfide + H2O = L-methionyl-(R)-S-oxide-[protein] + [thioredoxin]-dithiol. Has an important function as a repair enzyme for proteins that have been inactivated by oxidation. Catalyzes the reversible oxidation-reduction of methionine sulfoxide in proteins to methionine. The sequence is that of Peptide methionine sulfoxide reductase MsrA/MsrB 2 (msrAB2) from Streptococcus pneumoniae serotype 4 (strain ATCC BAA-334 / TIGR4).